The sequence spans 667 residues: Acetolactate synthase 1, chloroplastic (667 aa).

The span at 1 to 35 shows a compositional bias: low complexity; sequence MAAAAPSPSSSAFSKTLSPSSSTSSTLLPRSTFPF. Residues 1–45 are disordered; it reads MAAAAPSPSSSAFSKTLSPSSSTSSTLLPRSTFPFPHHPHKTTPP. A chloroplast-targeting transit peptide spans 1–94; the sequence is MAAAAPSPSS…VSRFAPDEPR (94 aa). Glu-141 contributes to the thiamine diphosphate binding site. Cys-161 and Cys-307 are oxidised to a cystine. FAD-binding positions include Arg-243, 349-370, and 392-411; these read HGTVYANYAVDSSDLLLAFGVR and DIDSAEIGKNKQPHVSICAD. The tract at residues 484 to 564 is thiamine pyrophosphate binding; it reads QHQMWAAQYY…VKIMLLNNQH (81 aa). The Mg(2+) site is built by Asp-535 and Asn-562.

The protein belongs to the TPP enzyme family. Requires Mg(2+) as cofactor. Thiamine diphosphate serves as cofactor.

It localises to the plastid. The protein localises to the chloroplast. The catalysed reaction is 2 pyruvate + H(+) = (2S)-2-acetolactate + CO2. Its pathway is amino-acid biosynthesis; L-isoleucine biosynthesis; L-isoleucine from 2-oxobutanoate: step 1/4. The protein operates within amino-acid biosynthesis; L-valine biosynthesis; L-valine from pyruvate: step 1/4. This chain is Acetolactate synthase 1, chloroplastic (ALS SURA), found in Nicotiana tabacum (Common tobacco).